We begin with the raw amino-acid sequence, 510 residues long: NAD(P)H-quinone oxidoreductase subunit 2 B, chloroplastic (510 aa).

13 helical membrane-spanning segments follow: residues 24 to 44, 57 to 77, 99 to 119, 124 to 144, 149 to 169, 183 to 203, 227 to 247, 295 to 315, 323 to 343, 347 to 367, 395 to 415, 418 to 438, and 482 to 502; these read LLLF…GLIL, IPWL…ALLF, IFQF…VEYI, MAIT…MFLC, LITI…LSGY, YLLM…WLYG, PGIS…LSPA, WHLL…LIAI, MLAY…IVGD, GYAS…GTFA, ALSL…AGFF, LHLF…IGLL, and LSMI…NPII.

The protein belongs to the complex I subunit 2 family. As to quaternary structure, NDH is composed of at least 16 different subunits, 5 of which are encoded in the nucleus.

Its subcellular location is the plastid. The protein resides in the chloroplast thylakoid membrane. It carries out the reaction a plastoquinone + NADH + (n+1) H(+)(in) = a plastoquinol + NAD(+) + n H(+)(out). The enzyme catalyses a plastoquinone + NADPH + (n+1) H(+)(in) = a plastoquinol + NADP(+) + n H(+)(out). Its function is as follows. NDH shuttles electrons from NAD(P)H:plastoquinone, via FMN and iron-sulfur (Fe-S) centers, to quinones in the photosynthetic chain and possibly in a chloroplast respiratory chain. The immediate electron acceptor for the enzyme in this species is believed to be plastoquinone. Couples the redox reaction to proton translocation, and thus conserves the redox energy in a proton gradient. The sequence is that of NAD(P)H-quinone oxidoreductase subunit 2 B, chloroplastic from Cucumis sativus (Cucumber).